The sequence spans 163 residues: Nucleotide-binding protein Dhaf_3127 (163 aa).

This sequence belongs to the YajQ family.

In terms of biological role, nucleotide-binding protein. This is Nucleotide-binding protein Dhaf_3127 from Desulfitobacterium hafniense (strain DSM 10664 / DCB-2).